Consider the following 187-residue polypeptide: Large ribosomal subunit protein uL10 (187 aa).

This sequence belongs to the universal ribosomal protein uL10 family. As to quaternary structure, part of the ribosomal stalk of the 50S ribosomal subunit. The N-terminus interacts with L11 and the large rRNA to form the base of the stalk. The C-terminus forms an elongated spine to which L12 dimers bind in a sequential fashion forming a multimeric L10(L12)X complex.

In terms of biological role, forms part of the ribosomal stalk, playing a central role in the interaction of the ribosome with GTP-bound translation factors. The protein is Large ribosomal subunit protein uL10 of Synechococcus sp. (strain JA-3-3Ab) (Cyanobacteria bacterium Yellowstone A-Prime).